The primary structure comprises 60 residues: U20-myrmicitoxin-Mri1a (60 aa).

The N-terminal stretch at 1–24 (MKSVILLFAVIAIIVAVIIPAING) is a signal peptide. Positions 25 to 34 (ESSSNPSANA) are excised as a propeptide.

It belongs to the formicidae venom precursor-01 superfamily. As to expression, expressed by the venom gland.

The protein localises to the secreted. Induces paralysis 5 minutes after injection into blowflies (L.caesar), and then death within 24 hours. May have antimicrobial properties, like most ant linear peptides. The chain is U20-myrmicitoxin-Mri1a from Manica rubida (European giant red ant).